The following is a 364-amino-acid chain: MGNTFGHLFRITTFGESHGGGVGVVIDGCPPQIEIAAEDIQFELDRRRPGQSRITTPRKETDTCEIVSGMFQGKTLGTPITILVRNKDTRPQDYSEMAQVYRPSHADATYDAKYGIRNWQGGGRSSARETIGRVAAGAIAKKILQQAAGVEVIGYVKRIKTVEADIDPDQVTLAQVEANMVRCPNPETAEEMIDLIDQTRRDANSIGGVVECVARQVPKGLGAPVFDKLEAELAKAVMSLPACKGFEIGSGFAGTQLTGLEHNDEFYTDETGRIRTVTNRSGGIQGGISNGENIVLRAAFKPTATIGKPQKTVNQAGEATTLAAKGRHDPCVLPRAVPMVEAMVALVLCDHLLRHHAQCELLTE.

NADP(+)-binding residues include arginine 47 and arginine 53. FMN contacts are provided by residues 124 to 126, glycine 286, 301 to 305, and arginine 327; these read RSS and KPTAT.

It belongs to the chorismate synthase family. As to quaternary structure, homotetramer. FMNH2 is required as a cofactor.

The enzyme catalyses 5-O-(1-carboxyvinyl)-3-phosphoshikimate = chorismate + phosphate. It participates in metabolic intermediate biosynthesis; chorismate biosynthesis; chorismate from D-erythrose 4-phosphate and phosphoenolpyruvate: step 7/7. In terms of biological role, catalyzes the anti-1,4-elimination of the C-3 phosphate and the C-6 proR hydrogen from 5-enolpyruvylshikimate-3-phosphate (EPSP) to yield chorismate, which is the branch point compound that serves as the starting substrate for the three terminal pathways of aromatic amino acid biosynthesis. This reaction introduces a second double bond into the aromatic ring system. The protein is Chorismate synthase of Acaryochloris marina (strain MBIC 11017).